The sequence spans 212 residues: MSLFDKKHLVTQADALPGRNTPMPIATLHAVNEHSMTNVPAGMEIAYFAMGCFWGVERLFWQLPGVYSTAAGYAGGYTPNPTYREVCSGQTGHAEAVRIVYDPAVISYEQLLQIFWENHDPTQGMQQGNDHGTQYRSAIYPLTPEQNAAAHASCERFQSAMAAAGDHRPITTEIAHATPFYYAEDEHQQYLHKNPYGYCGIGGIGVCLPPDA.

Residue cysteine 52 is part of the active site.

Belongs to the MsrA Met sulfoxide reductase family.

It catalyses the reaction L-methionyl-[protein] + [thioredoxin]-disulfide + H2O = L-methionyl-(S)-S-oxide-[protein] + [thioredoxin]-dithiol. The catalysed reaction is [thioredoxin]-disulfide + L-methionine + H2O = L-methionine (S)-S-oxide + [thioredoxin]-dithiol. Its function is as follows. Has an important function as a repair enzyme for proteins that have been inactivated by oxidation. Catalyzes the reversible oxidation-reduction of methionine sulfoxide in proteins to methionine. The chain is Peptide methionine sulfoxide reductase MsrA from Salmonella paratyphi B (strain ATCC BAA-1250 / SPB7).